Reading from the N-terminus, the 171-residue chain is Small ribosomal subunit protein uS5 (171 aa).

The S5 DRBM domain occupies tyrosine 15 to isoleucine 78.

The protein belongs to the universal ribosomal protein uS5 family. In terms of assembly, part of the 30S ribosomal subunit. Contacts proteins S4 and S8.

With S4 and S12 plays an important role in translational accuracy. Functionally, located at the back of the 30S subunit body where it stabilizes the conformation of the head with respect to the body. This Phytoplasma australiense protein is Small ribosomal subunit protein uS5.